An 830-amino-acid polypeptide reads, in one-letter code: Histone acetyltransferase KAT2A (830 aa).

The segment at methionine 1–arginine 94 is disordered. Residue alanine 2 is modified to N-acetylalanine. Composition is skewed to pro residues over residues alanine 7–serine 33 and alanine 41–alanine 51. The span at threonine 58 to glycine 69 shows a compositional bias: gly residues. The span at serine 83–arginine 94 shows a compositional bias: basic residues. Position 302 is a phosphoserine (serine 302). Over residues serine 398–glycine 417 the composition is skewed to low complexity. The segment at serine 398–lysine 426 is disordered. The 154-residue stretch at valine 496–asparagine 649 folds into the N-acetyltransferase domain. N6-acetyllysine is present on lysine 542. Glutamate 568 functions as the Proton donor/acceptor in the catalytic mechanism. Acetyl-CoA-binding positions include cysteine 572–valine 574, glutamine 579–threonine 585, and tyrosine 610. Succinyl-CoA contacts are provided by residues cysteine 572 to valine 574, glutamine 579 to threonine 585, and tyrosine 610. Lysine 721 participates in a covalent cross-link: Glycyl lysine isopeptide (Lys-Gly) (interchain with G-Cter in SUMO2). Residues lysine 721 to glycine 825 enclose the Bromo domain. Threonine 728 carries the phosphothreonine modification. Residues lysine 752 and lysine 784 each participate in a glycyl lysine isopeptide (Lys-Gly) (interchain with G-Cter in SUMO2) cross-link.

This sequence belongs to the acetyltransferase family. GCN5 subfamily. In terms of assembly, interacts with EP300, CREBBP and ADA2. Component of the TFTC-HAT complex, at least composed of TAF5L, TAF6L, TAF3, TADA3L, SUPT3H/SPT3, TAF2/TAFII150, TAF4/TAFII135, TAF5/TAFII100, KAT2A/GCN5L2, TAF10 and TRRAP. Component of the STAGA transcription coactivator-HAT complex, at least composed of SUPT3H, KAT2A, SUPT7L, TAF5L, TAF6L, TADA3L, TAD1L, TAF10, TAF12, TRRAP and TAF9. The STAGA core complex is associated with a subcomplex required for histone deubiquitination composed of ATXN7L3, ENY2 and USP22. Component of the ADA2A-containing complex (ATAC), composed of KAT14, KAT2A, TADA2L, TADA3L, ZZ3, MBIP, WDR5, YEATS2, CCDC101 and DR1. In the complex, it probably interacts directly with KAT14, MBIP and WDR5. Interacts with PML. Interacts with CEBPB. Interacts with TACC1, TACC2 and TACC3. Interacts with RELA. Interacts with NFATC2. Interacts with TBX5. Interacts with PLK4. Associates with the 2-oxoglutarate dehydrogenase complex. Interacts with XPC; leading to KAT2A recruitment to promoters and subsequent acetylation of histones. Interacts with ERCC3/XPB; leading to KAT2A recruitment to promoters and subsequent acetylation of histones. Interacts with ISL1. Interactions of ISL1 with MLIP1 or KAT2A may be mutually exclusive. Post-translationally, acetylated at Lys-542, inhibiting the protein acetyltransferase activity. Deacetylation at Lys-542 by SIRT6 promotes phosphorylation at Ser-302 and Thr-728 and subsequent activation of the protein acetyltransferase activity, leading to acetylation and inactivation of PPARGC1A. In brain, highly expressed in the hippocampal CA1 region (at protein level). Also expressed in the hippocampal subregions CA3 and the dentate gyrus as well as in the cortex and prefrontal cortex. Expressed at low level in the cerebellum.

Its subcellular location is the nucleus. It is found in the chromosome. The protein localises to the cytoplasm. It localises to the cytoskeleton. The protein resides in the microtubule organizing center. Its subcellular location is the centrosome. It catalyses the reaction L-lysyl-[histone] + acetyl-CoA = N(6)-acetyl-L-lysyl-[histone] + CoA + H(+). The catalysed reaction is L-lysyl-[protein] + acetyl-CoA = N(6)-acetyl-L-lysyl-[protein] + CoA + H(+). It carries out the reaction succinyl-CoA + L-lysyl-[protein] = N(6)-succinyl-L-lysyl-[protein] + CoA + H(+). The enzyme catalyses glutaryl-CoA + L-lysyl-[protein] = N(6)-glutaryl-L-lysyl-[protein] + CoA + H(+). In terms of biological role, protein lysine acyltransferase that can act as a acetyltransferase, glutaryltransferase, succinyltransferase or malonyltransferase, depending on the context. Acts as a histone lysine succinyltransferase: catalyzes succinylation of histone H3 on 'Lys-79' (H3K79succ), with a maximum frequency around the transcription start sites of genes. Succinylation of histones gives a specific tag for epigenetic transcription activation. Association with the 2-oxoglutarate dehydrogenase complex, which provides succinyl-CoA, is required for histone succinylation. In different complexes, functions either as an acetyltransferase (HAT) or as a succinyltransferase: in the SAGA and ATAC complexes, acts as a histone acetyltransferase. Has significant histone acetyltransferase activity with core histones, but not with nucleosome core particles. Has a a strong preference for acetylation of H3 at 'Lys-9' (H3K9ac). Acetylation of histones gives a specific tag for epigenetic transcription activation. Recruited by the XPC complex at promoters, where it specifically mediates acetylation of histone variant H2A.Z.1/H2A.Z, thereby promoting expression of target genes. Involved in long-term memory consolidation and synaptic plasticity: acts by promoting expression of a hippocampal gene expression network linked to neuroactive receptor signaling. Acts as a positive regulator of T-cell activation: upon TCR stimulation, recruited to the IL2 promoter following interaction with NFATC2 and catalyzes acetylation of histone H3 at 'Lys-9' (H3K9ac), leading to promote IL2 expression. Required for growth and differentiation of craniofacial cartilage and bone by regulating acetylation of histone H3 at 'Lys-9' (H3K9ac). Regulates embryonic stem cell (ESC) pluripotency and differentiation. Also acetylates non-histone proteins, such as CEBPB, MRE11, PPARGC1A, PLK4 and TBX5. Involved in heart and limb development by mediating acetylation of TBX5, acetylation regulating nucleocytoplasmic shuttling of TBX5. Acts as a negative regulator of centrosome amplification by mediating acetylation of PLK4. Acts as a negative regulator of gluconeogenesis by mediating acetylation and subsequent inactivation of PPARGC1A. Also acts as a histone glutaryltransferase: catalyzes glutarylation of histone H4 on 'Lys-91' (H4K91glu), a mark that destabilizes nucleosomes by promoting dissociation of the H2A-H2B dimers from nucleosomes. This Mus musculus (Mouse) protein is Histone acetyltransferase KAT2A.